The following is a 457-amino-acid chain: GTPase Der (457 aa).

EngA-type G domains are found at residues 4-169 (PTIA…PENN) and 177-352 (IMMS…NQHR). GTP-binding positions include 10-17 (GRPNVGKS), 57-61 (DTGGL), 120-123 (NKCE), 183-190 (GRPNVGKS), 230-234 (DTAGI), and 295-298 (NKWD). Residues 353-438 (RRVTTSVVNE…PLILLWRGKQ (86 aa)) form the KH-like domain.

The protein belongs to the TRAFAC class TrmE-Era-EngA-EngB-Septin-like GTPase superfamily. EngA (Der) GTPase family. As to quaternary structure, associates with the 50S ribosomal subunit.

Functionally, GTPase that plays an essential role in the late steps of ribosome biogenesis. The chain is GTPase Der from Prochlorococcus marinus (strain AS9601).